The chain runs to 390 residues: MEKDNGRQFTISQENWSLHRKGFQDQRRHQEKVRDAIKKNLPDLVSEENIVMSNGKDVIKIPIRSLDEYKIRYNYDKNQHVGQGKGDSKIGDIVARDPNGDKQAGAGKGSGAGDQAGEDYNEAEVSIVELEEMLFSELALPNLQKKEEQELVVEDIAFNDIRKKGLMGNVDKRRTILAAIKRNALNGKANIMPIYNDDLRFKTWTETIRPESKAVVIAMMDTSGSMGRFEKYMARSFFFWMTRFLRTKYETVEIEFIAHHTEAKVVSEEDFFSKGESGGTICSSAYRKALELIDEKYNPRAYNIYPFHFSDGDNLTSDNARCLKLVNQLMDRSNLFGYGEVNQYSRHSTLMSAYKNITDPRFMHYILKEKGDVYHALKFFFQKSAEEAPV.

Disordered regions lie at residues 1–31 (MEKD…RHQE) and 81–118 (VGQG…QAGE). The span at 7-16 (RQFTISQENW) shows a compositional bias: polar residues. 2 stretches are compositionally biased toward basic and acidic residues: residues 22–31 (GFQDQRRHQE) and 86–100 (GDSK…DPNG).

Belongs to the UPF0229 family.

The sequence is that of UPF0229 protein ABC1477 from Shouchella clausii (strain KSM-K16) (Alkalihalobacillus clausii).